A 583-amino-acid chain; its full sequence is Sensor protein SrrB (583 aa).

The Cytoplasmic portion of the chain corresponds to 1-11 (MMSRLNSVVIK). A helical transmembrane segment spans residues 12–32 (LWLTIILIVTTVLILLSIALI). Residues 33–174 (TFMQYYFTQE…SIEDTNNAIT (142 aa)) are Extracellular-facing. A helical transmembrane segment spans residues 175-195 (IITIITAVIFLTITTVFAFFL). Over 196 to 583 (SSRITKPLRR…TFIIKLPKPE (388 aa)) the chain is Cytoplasmic. Residues 197 to 249 (SRITKPLRRLRDQATRVSEGDYSYKPSVTTKDEIGQLSQAFNQMSTEIEEHVD) form the HAMP domain. One can recognise a Histidine kinase domain in the interval 366–583 (NVSHELRTPI…TFIIKLPKPE (218 aa)). Histidine 369 is subject to Phosphohistidine; by autocatalysis.

The protein localises to the cell membrane. It carries out the reaction ATP + protein L-histidine = ADP + protein N-phospho-L-histidine.. In terms of biological role, member of the two-component regulatory system SrrA/SrrB, which is involved in the global regulation of staphylococcal virulence factors in response to environmental oxygen levels as well as biofilm formation. Also plays an essential role in host-derived nitric oxide resistance by regulating hmp/flavohemoglobin, an enzyme that detoxifies nitric oxide by converting it to nitrate. Functions as a sensor protein kinase which is autophosphorylated at a histidine residue and transfers its phosphate group to SrrA. In turn, SrrA binds to the upstream promoter regions of the target genes to positively and negatively regulate their expression. This is Sensor protein SrrB (srrB) from Staphylococcus aureus.